We begin with the raw amino-acid sequence, 53 residues long: Light-harvesting protein B800/850/890 beta-1 chain (53 aa).

Over 1 to 19 (ADNMSLTGLSDEEAKEFHS) the chain is Cytoplasmic. 2 residues coordinate a bacteriochlorophyll: His-18 and His-36. Residues 20 to 42 (IFMQSFLIFTAVAVVAHFLAWAW) traverse the membrane as a helical segment. The Periplasmic portion of the chain corresponds to 43-53 (RPWIPGAEGYG).

The protein belongs to the antenna complex beta subunit family. The core complex is formed by different alpha and beta chains, binding bacteriochlorophyll molecules, and arranged most probably in tetrameric structures disposed around the reaction center. The non-pigmented gamma chains may constitute additional components.

The protein localises to the cell inner membrane. In terms of biological role, antenna complexes are light-harvesting systems, which transfer the excitation energy to the reaction centers. This Halorhodospira halophila (strain DSM 244 / SL1) (Ectothiorhodospira halophila (strain DSM 244 / SL1)) protein is Light-harvesting protein B800/850/890 beta-1 chain.